A 289-amino-acid chain; its full sequence is MLKSVHQKVARRTGPLLAWLKLLWVRIDEDHMTTLAGNLAYVSLLSLVPFVAVIFALFAAFPMFSDVSVQLRHFVFANFMPATGDIIQRYIEQFVANSSKMTAVGALGLIVTSLLLMYAIDSALNTIWRSTRQRPKVYSFAVYWMILTLGPLLAGASLVISSYLLSLRWASGFNTMIDDVLRIFPLLLSWLSFWLLYSVVPTTRVPARDALIGSLVAALLFELGKKGFALYITMFPSYQLIYGVLAVIPILFLWVYWTWCIVLLGAEITVTLGDYRKLRQAAREEAESV.

6 consecutive transmembrane segments (helical) span residues 44–64 (LLSL…FPMF), 104–124 (VGAL…DSAL), 140–160 (FAVY…SLVI), 183–203 (IFPL…VPTT), 215–235 (LVAA…ITMF), and 244–264 (VLAV…IVLL).

It belongs to the UPF0761 family.

It localises to the cell inner membrane. This is UPF0761 membrane protein ESA_04062 from Cronobacter sakazakii (strain ATCC BAA-894) (Enterobacter sakazakii).